A 343-amino-acid polypeptide reads, in one-letter code: Anthranilate phosphoribosyltransferase (343 aa).

5-phospho-alpha-D-ribose 1-diphosphate-binding positions include Gly86, 89 to 90, Thr94, 96 to 99, 114 to 122, and Ser126; these read GD, NIST, and KHGNRSASG. Gly86 contributes to the anthranilate binding site. A Mg(2+)-binding site is contributed by Ser98. Asn117 is a binding site for anthranilate. Position 172 (Arg172) interacts with anthranilate. 2 residues coordinate Mg(2+): Asp231 and Glu232.

This sequence belongs to the anthranilate phosphoribosyltransferase family. As to quaternary structure, homodimer. It depends on Mg(2+) as a cofactor.

It catalyses the reaction N-(5-phospho-beta-D-ribosyl)anthranilate + diphosphate = 5-phospho-alpha-D-ribose 1-diphosphate + anthranilate. The protein operates within amino-acid biosynthesis; L-tryptophan biosynthesis; L-tryptophan from chorismate: step 2/5. Catalyzes the transfer of the phosphoribosyl group of 5-phosphorylribose-1-pyrophosphate (PRPP) to anthranilate to yield N-(5'-phosphoribosyl)-anthranilate (PRA). This is Anthranilate phosphoribosyltransferase from Synechococcus sp. (strain JA-3-3Ab) (Cyanobacteria bacterium Yellowstone A-Prime).